A 374-amino-acid chain; its full sequence is Guanine nucleotide-binding protein subunit alpha-15 (374 aa).

A G-alpha domain is found at 41–374; that stretch reads EELKLLLLGP…ARYLDEINLL (334 aa). The interval 44–57 is G1 motif; the sequence is KLLLLGPGESGKST. GTP contacts are provided by residues 49 to 56, 183 to 189, 208 to 212, 277 to 280, and A346; these read GPGESGKS, LRSRMPT, DVGGQ, and NKTD. Residues S56 and T189 each coordinate Mg(2+). Residues 181 to 189 are G2 motif; sequence DVLRSRMPT. The interval 204–213 is G3 motif; that stretch reads LRIVDVGGQR. The segment at 273-280 is G4 motif; it reads ILFLNKTD. Residues 344–349 form a G5 motif region; that stretch reads TCATDT.

It belongs to the G-alpha family. G(q) subfamily. As to quaternary structure, g proteins are composed of 3 units; alpha, beta and gamma. The alpha chain contains the guanine nucleotide binding site. Expressed primarily in hematopoietic cells. Coexpressed with EDG6 at the same relative levels in all tissues examined, with the highest levels in adult spleen and lung.

In terms of biological role, guanine nucleotide-binding proteins (G proteins) are involved as modulators or transducers in various transmembrane signaling systems. The chain is Guanine nucleotide-binding protein subunit alpha-15 (Gna15) from Mus musculus (Mouse).